We begin with the raw amino-acid sequence, 730 residues long: Jacalin-related lectin 5 (730 aa).

A Jacalin-type lectin 1 domain is found at 1–126 (MSWDDGKHTK…LNSIDAHFAP (126 aa)). Positions 121-450 (DAHFAPAPPP…GNQWDDGTDH (330 aa)) are disordered. Low complexity-rich tracts occupy residues 138–153 (GASG…GSAG), 168–179 (AGGSKPSSGSAG), 196–207 (AGGSKPSSGSAG), and 248–261 (TEKN…SSGS). Residues 275 to 307 (ETVSNIGDTESNAGGSKSNDGANNGASGIESNA) show a composition bias toward polar residues. Positions 314–323 (FGAGGTGGIG) are enriched in gly residues. The segment covering 343–358 (DGASGIGSNDGSTGTN) has biased composition (low complexity). Composition is skewed to polar residues over residues 366–375 (DSNIEGTENN) and 388–416 (IGNS…TGGK). Residues 417–429 (ESNTGSESNTNSS) show a composition bias toward low complexity. Jacalin-type lectin domains follow at residues 430–572 (PQKL…YFVP) and 584–727 (PNKV…YFIP).

This sequence belongs to the jacalin lectin family.

This Arabidopsis thaliana (Mouse-ear cress) protein is Jacalin-related lectin 5 (JAL5).